A 401-amino-acid chain; its full sequence is Probable E3 ubiquitin-protein ligase RHC2A (401 aa).

The disordered stretch occupies residues Thr41–Ser93. Residues Ala76–Ser93 are compositionally biased toward polar residues. Residues Cys201 to Arg242 form an RING-type; atypical zinc finger.

It catalyses the reaction S-ubiquitinyl-[E2 ubiquitin-conjugating enzyme]-L-cysteine + [acceptor protein]-L-lysine = [E2 ubiquitin-conjugating enzyme]-L-cysteine + N(6)-ubiquitinyl-[acceptor protein]-L-lysine.. Its pathway is protein modification; protein ubiquitination. Its function is as follows. Probable E3 ubiquitin-protein ligase that may possess E3 ubiquitin ligase activity in vitro. In Arabidopsis thaliana (Mouse-ear cress), this protein is Probable E3 ubiquitin-protein ligase RHC2A.